Consider the following 274-residue polypeptide: Large ribosomal subunit protein uL2 (274 aa).

Residues Val-220 to Thr-259 form a disordered region. Basic and acidic residues predominate over residues Pro-227–Ala-239. Residues Lys-249–Thr-259 show a composition bias toward basic residues.

The protein belongs to the universal ribosomal protein uL2 family. Part of the 50S ribosomal subunit. Forms a bridge to the 30S subunit in the 70S ribosome.

Functionally, one of the primary rRNA binding proteins. Required for association of the 30S and 50S subunits to form the 70S ribosome, for tRNA binding and peptide bond formation. It has been suggested to have peptidyltransferase activity; this is somewhat controversial. Makes several contacts with the 16S rRNA in the 70S ribosome. This Chloroflexus aggregans (strain MD-66 / DSM 9485) protein is Large ribosomal subunit protein uL2.